Here is a 747-residue protein sequence, read N- to C-terminus: Protein O-mannosyl-transferase 1 (747 aa).

A run of 7 helical transmembrane segments spans residues 30 to 50, 90 to 110, 121 to 141, 176 to 196, 205 to 225, 228 to 248, and 267 to 287; these read PLVV…LGLL, FGHM…NFLW, VPVW…VPMA, LLES…LKFF, SVHW…AVGI, MGIF…WHLI, and VALL…HLML. 3 MIR domains span residues 318–381, 392–449, and 453–513; these read PLEV…VKDP, PRPV…LDIV, and SNQD…VEEH. N435, N471, and N539 each carry an N-linked (GlcNAc...) asparagine glycan. Helical transmembrane passes span 597-617, 636-656, and 660-680; these read IVIW…FFWY, WVLA…PFFL, and MLFL…LPIV.

It belongs to the glycosyltransferase 39 family.

It localises to the endoplasmic reticulum membrane. The enzyme catalyses a di-trans,poly-cis-dolichyl beta-D-mannosyl phosphate + L-seryl-[protein] = 3-O-(alpha-D-mannosyl)-L-seryl-[protein] + a di-trans,poly-cis-dolichyl phosphate + H(+). The catalysed reaction is a di-trans,poly-cis-dolichyl beta-D-mannosyl phosphate + L-threonyl-[protein] = 3-O-(alpha-D-mannosyl)-L-threonyl-[protein] + a di-trans,poly-cis-dolichyl phosphate + H(+). Its pathway is protein modification; protein glycosylation. Transfers mannosyl residues to the hydroxyl group of serine or threonine residues. Coexpression of both POMT1 and POMT2 is necessary for enzyme activity, expression of either POMT1 or POMT2 alone is insufficient. Essentially dedicated to O-mannosylation of alpha-DAG1 and few other proteins but not of cadherins and protocaherins. This Rattus norvegicus (Rat) protein is Protein O-mannosyl-transferase 1 (Pomt1).